Consider the following 329-residue polypeptide: Deoxynucleotidyltransferase terminal-interacting protein 1 (329 aa).

Residues 1–27 (MGATGDVEQPRGPGGAERGGPELGDAG) are disordered. Residues 12-22 (GPGGAERGGPE) show a composition bias toward gly residues. The interval 56-147 (MTTSFTDPAI…RLTHELPGIK (92 aa)) is important for dimerization. A DNA-binding region (a.T hook) is located at residues 159 to 173 (RGSPIPKKRKGRPPG). Phosphoserine is present on S161. A Nuclear localization signal motif is present at residues 164–170 (PKKRKGR). Positions 197 to 316 (REGPKWDPAR…MRKYMETLRT (120 aa)) are important for DNA and nucleosome binding. Positions 216 to 237 (GSRANKALGMGGTRGRIYIKHP) form a DNA-binding region, H-T-H motif.

Monomer and homodimer. A minor proportion may form homotrimers. Interacts with ZNF541. Interacts with the terminal deoxynucleotidyltransferase DNTT. Interacts with TRERF1. Identified in a histone deacetylase complex that contains DNTTIP1, HDAC1 and MIDEAS; this complex assembles into a tetramer that contains four copies of each protein chain. Component of a histone deacetylase complex containing DNTTIP1, ZNF541, HDAC1 and HDAC2. Identified in a complex with KCTD19, HDAC1, HDAC2 and ZNF541.

It is found in the nucleus. In terms of biological role, increases DNTT terminal deoxynucleotidyltransferase activity (in vitro). Also acts as a transcriptional regulator, binding to the consensus sequence 5'-GNTGCATG-3' following an AT-tract. Associates with RAB20 promoter and positively regulates its transcription. Binds DNA and nucleosomes; may recruit HDAC1 complexes to nucleosomes or naked DNA. This chain is Deoxynucleotidyltransferase terminal-interacting protein 1 (DNTTIP1), found in Bos taurus (Bovine).